The chain runs to 184 residues: Ribosome-recycling factor (184 aa).

Belongs to the RRF family.

It is found in the cytoplasm. Its function is as follows. Responsible for the release of ribosomes from messenger RNA at the termination of protein biosynthesis. May increase the efficiency of translation by recycling ribosomes from one round of translation to another. This is Ribosome-recycling factor from Clostridium botulinum (strain Langeland / NCTC 10281 / Type F).